Consider the following 455-residue polypeptide: P2X purinoceptor 5 (455 aa).

Topologically, residues 1-30 (MGQAAWKGFVLSLFDYKTAKFVVAKSKKVG) are cytoplasmic. Residues 31–50 (LLYRVLQLTILLYLLIWVFL) traverse the membrane as a helical segment. Residues 51–339 (IKKSYQDIDT…KFSIIPTVIN (289 aa)) are Extracellular-facing. ATP is bound at residue 69-71 (KVK). Asparagine 77 is a glycosylation site (N-linked (GlcNAc...) asparagine). 3 disulfide bridges follow: cysteine 118–cysteine 169, cysteine 129–cysteine 152, and cysteine 135–cysteine 163. An N-linked (GlcNAc...) asparagine glycan is attached at asparagine 157. ATP is bound at residue threonine 189. Asparagine 202 carries an N-linked (GlcNAc...) asparagine glycan. Disulfide bonds link cysteine 220–cysteine 229 and cysteine 263–cysteine 272. Residues 294-296 (NFR) and lysine 314 each bind ATP. The helical transmembrane segment at 340 to 362 (IGSGLALMGAGAFFCDLVLIYLI) threads the bilayer. At 363–455 (RKSEFYRDKK…PSQILQTVKT (93 aa)) the chain is on the cytoplasmic side.

It belongs to the P2X receptor family. Functional P2XRs are organized as homomeric and heteromeric trimers. Homotrimer. Forms heterotrimer with P2RX1. Expressed in a number of tissues, with highest levels detected in heart and kidney.

Its subcellular location is the cell membrane. It catalyses the reaction Na(+)(in) = Na(+)(out). The enzyme catalyses Ca(2+)(in) = Ca(2+)(out). It carries out the reaction chloride(in) = chloride(out). With respect to regulation, activated by ATP. Slowly desensitizing. Not activated by ATP agonist alpha/beta-methylene-ATP. Highly sensitive to the antagonists suramin and PPADS. ATP-gated nonselective transmembrane cation channel permeable to potassium, sodium and calcium. Unlike other P2RX receptors, the P2X5 receptor is also permeable to chloride. Acts as an important regulator of inflammatory-related bone loss and osteoclast multinucleation. The chain is P2X purinoceptor 5 from Mus musculus (Mouse).